The primary structure comprises 783 residues: Outer membrane usher protein FanD (783 aa).

Positions 1 to 23 are cleaved as a signal peptide; that stretch reads MNRKKHQILKILLLCLISSKSSA. A disulfide bridge links Cys-763 with Cys-782.

Belongs to the fimbrial export usher family.

Its subcellular location is the cell outer membrane. In terms of biological role, involved in the export and assembly of K99 fimbrial subunits across the outer membrane. This chain is Outer membrane usher protein FanD (fanD), found in Escherichia coli.